A 147-amino-acid polypeptide reads, in one-letter code: Leech anti-platelet protein (147 aa).

A signal peptide spans 1 to 21 (MNSFLFSLACSLLVAIPAISA). Residues 21-71 (AQDEDAGGAGDETSEGEDTTGSDETPSTGGGGDGGNEETITAGNEDCWSKR) form a disordered region. Acidic residues predominate over residues 22–41 (QDEDAGGAGDETSEGEDTTG). 3 disulfide bridges follow: Cys67/Cys145, Cys92/Cys117, and Cys96/Cys105.

Post-translationally, the N-terminus is blocked. In terms of tissue distribution, expressed by salivary glands.

It is found in the secreted. In terms of biological role, inhibits collagen-stimulated platelet aggregation (IC(50)=60 nM), dense granule release and serotonin release. Does not inhibit platelet aggregation induced by ADP, arachidonic acid, and thrombin. This chain is Leech anti-platelet protein, found in Haementeria officinalis (Mexican leech).